The following is a 1868-amino-acid chain: Protein TIC 214 (1868 aa).

Transmembrane regions (helical) follow at residues 11-31 (LLLL…YYGF), 64-84 (FIMG…HLAL), 87-107 (PHTL…FFWN), 126-146 (LSIQ…HFIL), 166-186 (ILFV…LMKS), and 221-241 (IFSI…PSPI). The span at 248-276 (ESSKGEEKKKTEKERDVEMETISKTKKIE) shows a compositional bias: basic and acidic residues. Disordered regions lie at residues 248 to 277 (ESSK…KIEQ), 617 to 643 (FDFE…GIRS), 658 to 700 (DEDT…QAEE), 782 to 806 (TSDY…KRKE), and 1537 to 1607 (YIDP…RKKK). The span at 617 to 636 (FDFEEEEEEEEEEDDEEEPT) shows a compositional bias: acidic residues. The span at 674-683 (AKNSDQAKNS) shows a compositional bias: polar residues. Composition is skewed to basic and acidic residues over residues 684–700 (DQAK…QAEE), 789–806 (GAKE…KRKE), and 1537–1576 (YIDP…ERQH).

The protein belongs to the TIC214 family. As to quaternary structure, part of the Tic complex.

It localises to the plastid. The protein resides in the chloroplast inner membrane. Its function is as follows. Involved in protein precursor import into chloroplasts. May be part of an intermediate translocation complex acting as a protein-conducting channel at the inner envelope. This chain is Protein TIC 214, found in Nuphar advena (Common spatterdock).